The primary structure comprises 307 residues: Ribosomal RNA small subunit methyltransferase H (307 aa).

S-adenosyl-L-methionine-binding positions include 32–34 (GGH), Asp-52, Phe-78, Asp-99, and Gln-106.

The protein belongs to the methyltransferase superfamily. RsmH family.

It localises to the cytoplasm. The catalysed reaction is cytidine(1402) in 16S rRNA + S-adenosyl-L-methionine = N(4)-methylcytidine(1402) in 16S rRNA + S-adenosyl-L-homocysteine + H(+). Its function is as follows. Specifically methylates the N4 position of cytidine in position 1402 (C1402) of 16S rRNA. The polypeptide is Ribosomal RNA small subunit methyltransferase H (Acinetobacter baumannii (strain SDF)).